The sequence spans 146 residues: 16.0 kDa heat shock protein, peroxisomal (146 aa).

In terms of domain architecture, sHSP spans 23–143 (WASASATAAM…RPRTRPIAVS (121 aa)). The Microbody targeting signal motif lies at 144–146 (SKL).

The protein belongs to the small heat shock protein (HSP20) family. As to quaternary structure, may form oligomeric structures.

Its subcellular location is the peroxisome. The sequence is that of 16.0 kDa heat shock protein, peroxisomal (HSP16.0) from Oryza sativa subsp. japonica (Rice).